Here is a 296-residue protein sequence, read N- to C-terminus: MLNRFSYSSNAWHNLRVDGPDADGIAVIVLARSQSRNALTLPMLTDMIQLLSAMDADDSVKCIVFTGEGQFFCSGVDLTEGFGEIGKTRDTHRDAGGKLALAIHNCCKPTIAAINGTAVGVGITMTLPMSIRIAAKTAKISFPFVRREIVADAASSFYLPRLIGYGRALHLFTTGALYSAESGLLHGLFSETVNSASSTLPRALEVARDIAINTSQVGGCLTRDLIYRSSQSPEQAHLLESAILYTRYQSRDFKEGVKSFLEKRKPRFQDTMREQSGEGVLERGDCVVGLASKPKL.

Residues 294–296 carry the Peroxisomal targeting signal type 1 motif; it reads PKL.

This sequence belongs to the enoyl-CoA hydratase/isomerase family.

It localises to the peroxisome. The catalysed reaction is a (3S)-3-hydroxyacyl-CoA = a (2E)-enoyl-CoA + H2O. It carries out the reaction a 4-saturated-(3S)-3-hydroxyacyl-CoA = a (3E)-enoyl-CoA + H2O. Its pathway is mycotoxin biosynthesis. Its function is as follows. Enoyl-CoA hydratase; part of the gene clusters that mediate the biosynthesis of the host-selective toxins (HSTs) AK-toxins responsible for Japanese pear black spot disease by the Japanese pear pathotype. AK-toxins are esters of 9,10-epoxy 8-hydroxy 9-methyldecatrienoic acid (EDA). On cellular level, AK-toxins affect plasma membrane of susceptible cells and cause a sudden increase in loss of K(+) after a few minutes of toxin treatment. The acyl-CoA ligase AKT1, the hydrolase AKT2 and enoyl-CoA hydratase AKT3 are all involved in the biosynthesis of the AK-, AF- and ACT-toxin common 9,10-epoxy-8-hydroxy-9-methyl-decatrienoic acid (EDA) structural moiety. Part of the EDA biosynthesis occurs in the peroxisome since these 3 enzymes are localized in peroxisomes. The exact roles of the 3 enzymes, as well as of additional AK-toxin clusters enzymes, including AKT4, AKT6 and AKTS1, have still to be elucidated. The Cytochrome P450 monooxygenase AKT7 on the other side functions to limit production of EDA and AK-toxin, probably via the catalysis of a side reaction of EDA or its precursor. The protein is Enoyl-CoA hydratase AKT3-2 of Alternaria alternata (Alternaria rot fungus).